A 202-amino-acid polypeptide reads, in one-letter code: Adapter protein MecA 2 (202 aa).

Belongs to the MecA family. In terms of assembly, homodimer.

Its function is as follows. Enables the recognition and targeting of unfolded and aggregated proteins to the ClpC protease or to other proteins involved in proteolysis. Acts negatively in the development of competence by binding ComK and recruiting it to the ClpCP protease. When overexpressed, inhibits sporulation. Also involved in Spx degradation by ClpC. In Bacillus cereus (strain ATCC 14579 / DSM 31 / CCUG 7414 / JCM 2152 / NBRC 15305 / NCIMB 9373 / NCTC 2599 / NRRL B-3711), this protein is Adapter protein MecA 2 (mecA2).